The following is a 246-amino-acid chain: Pyridoxine 5'-phosphate synthase (246 aa).

A 3-amino-2-oxopropyl phosphate-binding site is contributed by Asn10. 12-13 (DH) is a 1-deoxy-D-xylulose 5-phosphate binding site. A 3-amino-2-oxopropyl phosphate-binding site is contributed by Arg21. The Proton acceptor role is filled by His46. 2 residues coordinate 1-deoxy-D-xylulose 5-phosphate: Arg48 and His53. The Proton acceptor role is filled by Glu73. Residue Thr103 coordinates 1-deoxy-D-xylulose 5-phosphate. The Proton donor role is filled by His193. 3-amino-2-oxopropyl phosphate contacts are provided by residues Gly194 and 215–216 (GH).

The protein belongs to the PNP synthase family. As to quaternary structure, homooctamer; tetramer of dimers.

It is found in the cytoplasm. It carries out the reaction 3-amino-2-oxopropyl phosphate + 1-deoxy-D-xylulose 5-phosphate = pyridoxine 5'-phosphate + phosphate + 2 H2O + H(+). It participates in cofactor biosynthesis; pyridoxine 5'-phosphate biosynthesis; pyridoxine 5'-phosphate from D-erythrose 4-phosphate: step 5/5. Its function is as follows. Catalyzes the complicated ring closure reaction between the two acyclic compounds 1-deoxy-D-xylulose-5-phosphate (DXP) and 3-amino-2-oxopropyl phosphate (1-amino-acetone-3-phosphate or AAP) to form pyridoxine 5'-phosphate (PNP) and inorganic phosphate. In Rhodopirellula baltica (strain DSM 10527 / NCIMB 13988 / SH1), this protein is Pyridoxine 5'-phosphate synthase.